Consider the following 385-residue polypeptide: Mannitol-1-phosphate 5-dehydrogenase (385 aa).

Position 3–14 (3–14 (DVHFGAGNIGRG)) interacts with NAD(+).

Belongs to the mannitol dehydrogenase family.

The enzyme catalyses D-mannitol 1-phosphate + NAD(+) = beta-D-fructose 6-phosphate + NADH + H(+). In Lactiplantibacillus plantarum (strain ATCC BAA-793 / NCIMB 8826 / WCFS1) (Lactobacillus plantarum), this protein is Mannitol-1-phosphate 5-dehydrogenase.